The primary structure comprises 605 residues: Arginyl-tRNA--protein transferase 2 (605 aa).

Over residues 496–513 (KVSSSSSSPQASETLLES) the composition is skewed to low complexity. Positions 496-549 (KVSSSSSSPQASETLLESTSEHEDMEQGDTNDDDDEMYNSDEDSDSDSSSSRNR) are disordered. Residues 518–541 (EDMEQGDTNDDDDEMYNSDEDSDS) show a composition bias toward acidic residues.

This sequence belongs to the R-transferase family.

The catalysed reaction is an N-terminal L-alpha-aminoacyl-[protein] + L-arginyl-tRNA(Arg) = an N-terminal L-arginyl-L-aminoacyl-[protein] + tRNA(Arg) + H(+). Involved in the post-translational conjugation of arginine to the N-terminal aspartate or glutamate of a protein. This arginylation is required for degradation of the protein via the ubiquitin pathway. Component of the N-end rule pathway with ATE1 and PRT6. The N-end rule pathway regulates seed after-ripening, seedling sugar sensitivity, seedling lipid breakdown, and abscisic acid (ABA) sensitivity of germination. The end-rule pathway regulates various aspects of leaf and shoot development. Involved in the oxygen-dependent N-arginylation of RAP2-12, an activator of hypoxic gene expression. This N-terminal modification leads to ubiquitination by PRT6 and subsequent degradation of RAP2-12 under aerobic conditions. Involved in disease resistance. The end-rule pathway plays a role in regulating the timing and amplitude of the immune response following infection with the bacterial pathogen Pseudomonas syringae pv tomato. Regulates the biosynthesis of plant-defense metabolites such as glucosinolates, and the biosynthesis and response to the phytohormone jasmonate (JA), which plays a key role in plant immunity. This chain is Arginyl-tRNA--protein transferase 2, found in Arabidopsis thaliana (Mouse-ear cress).